Here is a 252-residue protein sequence, read N- to C-terminus: Acetoacetate decarboxylase (252 aa).

The Schiff-base intermediate with acetoacetate role is filled by K116.

Belongs to the ADC family.

The enzyme catalyses acetoacetate + H(+) = acetone + CO2. Catalyzes the conversion of acetoacetate to acetone and carbon dioxide. This chain is Acetoacetate decarboxylase, found in Paraburkholderia xenovorans (strain LB400).